Reading from the N-terminus, the 229-residue chain is GTP cyclohydrolase 1 (229 aa).

A disordered region spans residues 1–26 (MDAKIKPLRGGKPADARPEFQPAELD). 3 residues coordinate Zn(2+): C118, H121, and C189.

The protein belongs to the GTP cyclohydrolase I family. In terms of assembly, toroid-shaped homodecamer, composed of two pentamers of five dimers.

It carries out the reaction GTP + H2O = 7,8-dihydroneopterin 3'-triphosphate + formate + H(+). The protein operates within cofactor biosynthesis; 7,8-dihydroneopterin triphosphate biosynthesis; 7,8-dihydroneopterin triphosphate from GTP: step 1/1. The polypeptide is GTP cyclohydrolase 1 (Rhodopseudomonas palustris (strain BisB5)).